The sequence spans 506 residues: Sucrose transport protein SUT3 (506 aa).

Topologically, residues 1 to 20 are cytoplasmic; it reads MAVDMELDGGGDGKGKAPPQ. A helical membrane pass occupies residues 21-41; that stretch reads ISLSGLFLACMVAGGVQYGWA. Residues 42–54 lie on the Extracellular side of the membrane; it reads LQLSLLTPYIQTL. The helical transmembrane segment at 55-75 threads the bilayer; sequence GIPHALTSVMWLCGPIAGLIV. Residues 76–94 lie on the Cytoplasmic side of the membrane; the sequence is QPCVGLYSDKCTSSLGRRR. A helical transmembrane segment spans residues 95-115; the sequence is PFILTGCIIICISVIVIGFSS. Residues 116–135 lie on the Extracellular side of the membrane; it reads DIGYALGDATEDCKVYRGPR. Residues 136–156 form a helical membrane-spanning segment; it reads YHAAAAFILGFWLLDFSNNTV. At 157–171 the chain is on the cytoplasmic side; the sequence is QGPARALMADLSGRH. A helical membrane pass occupies residues 172–192; that stretch reads GPSAANAIFCSWMALGNILGY. At 193–220 the chain is on the extracellular side; sequence SSGSTNDWHKWFPFLMTRACCEACANLK. Residues 221-241 traverse the membrane as a helical segment; the sequence is AAFLVAVVFLGLSTAVTMVFA. Residues 242 to 275 are Cytoplasmic-facing; sequence REVALDPVAAAKRNEGEASGPLAVFKGMKNLPVG. The helical transmembrane segment at 276–296 threads the bilayer; that stretch reads MPSVLIVTGLTWLSWFPFILF. The Extracellular portion of the chain corresponds to 297–327; the sequence is DTDWMGREIYHGRPDGSPAEVTAFQEGVRQG. The helical transmembrane segment at 328–348 threads the bilayer; the sequence is AFGLLLNSIVLGISSFLIEPM. The Cytoplasmic portion of the chain corresponds to 349-355; it reads CRRLGAR. Residues 356-376 traverse the membrane as a helical segment; that stretch reads AVWVMSSAVVCVAMAAVSVLS. At 377-404 the chain is on the extracellular side; that stretch reads AWSLGDFGGSVQDAARAPAEEGGVRASA. The chain crosses the membrane as a helical span at residues 405-425; it reads LALFVFLGLPFAVLCSVPFAV. Topologically, residues 426 to 441 are cytoplasmic; sequence TAQLTASRGGGQGLCT. A helical transmembrane segment spans residues 442–462; the sequence is GVLNISIVVPQMAIALGAGPW. At 463–470 the chain is on the extracellular side; that stretch reads DELFGEGN. The chain crosses the membrane as a helical span at residues 471 to 491; the sequence is IPAFAMASVFAAAAAAAGVVL. Over 492 to 506 the chain is Cytoplasmic; sequence LPKVSVRSVSMAGGH.

Belongs to the glycoside-pentoside-hexuronide (GPH) cation symporter transporter (TC 2.A.2.4) family. As to quaternary structure, homodimer.

The protein resides in the cell membrane. It functions in the pathway glycan biosynthesis; sucrose metabolism. Functionally, responsible for the transport of sucrose into the cell, with the concomitant uptake of protons (symport system). May also transport other glucosides. The sequence is that of Sucrose transport protein SUT3 (SUT3) from Oryza sativa subsp. indica (Rice).